The primary structure comprises 180 residues: Putative manganese efflux pump MntP (180 aa).

6 helical membrane passes run 1–21, 34–54, 63–83, 103–123, 129–149, and 160–180; these read MLSVILLAIALAMDAFSISIT, ILWYGIFFGGFQCFMPIIGYV, ISTYAPWIAFILLLCIGLNMI, VTLLAIATSIDAFAVGVTFAI, VIPCAIIGIITFLFSIVGIFI, and KFQILGGVILILLGFKILLGF.

Belongs to the MntP (TC 9.B.29) family.

It is found in the cell membrane. Functionally, probably functions as a manganese efflux pump. In Methanosphaera stadtmanae (strain ATCC 43021 / DSM 3091 / JCM 11832 / MCB-3), this protein is Putative manganese efflux pump MntP.